Here is a 594-residue protein sequence, read N- to C-terminus: Alanine--tRNA ligase (594 aa).

Zn(2+) contacts are provided by His456, His460, Cys558, and His562.

It belongs to the class-II aminoacyl-tRNA synthetase family. Requires Zn(2+) as cofactor.

It localises to the cytoplasm. It catalyses the reaction tRNA(Ala) + L-alanine + ATP = L-alanyl-tRNA(Ala) + AMP + diphosphate. Catalyzes the attachment of alanine to tRNA(Ala) in a two-step reaction: alanine is first activated by ATP to form Ala-AMP and then transferred to the acceptor end of tRNA(Ala). Also edits incorrectly charged Ser-tRNA(Ala) and Gly-tRNA(Ala) via its editing domain. The protein is Alanine--tRNA ligase (alaS) of Borreliella afzelii (strain PKo) (Borrelia afzelii).